A 530-amino-acid polypeptide reads, in one-letter code: Hyccin 2 (530 aa).

Phosphothreonine is present on residues T30 and T306. Phosphoserine is present on residues S321 and S341. The segment at 328-410 is disordered; sequence RREGAEGVNG…DSVVRKQYVQ (83 aa). Residues 353 to 373 are compositionally biased toward polar residues; that stretch reads SGASLSSQPIGTKPSSSSQRG. 4 positions are modified to phosphoserine: S430, S442, S444, and S491. The interval 502-530 is disordered; that stretch reads EGKELLSPGAPLTKQSRSPSFNMQLISQV. The segment covering 514 to 530 has biased composition (polar residues); that stretch reads TKQSRSPSFNMQLISQV.

Belongs to the Hyccin family. As to quaternary structure, component of a phosphatidylinositol 4-kinase (PI4K) complex, composed of PI4KA, EFR3 (EFR3A or EFR3B), TTC7 (TTC7A or TTC7B) and HYCC (HYCC1 or HYCC2).

It is found in the cytoplasm. The protein resides in the cytosol. It localises to the cell membrane. Its function is as follows. Component of a complex required to localize phosphatidylinositol 4-kinase (PI4K) to the plasma membrane. The protein is Hyccin 2 of Homo sapiens (Human).